A 64-amino-acid polypeptide reads, in one-letter code: DNA gyrase inhibitor YacG (64 aa).

Residues C9, C12, C28, and C32 each coordinate Zn(2+). Residues 42–64 (DEENAIPGAPDMSDSDGWSEEQY) form a disordered region. Acidic residues predominate over residues 54 to 64 (SDSDGWSEEQY).

It belongs to the DNA gyrase inhibitor YacG family. Interacts with GyrB. The cofactor is Zn(2+).

Inhibits all the catalytic activities of DNA gyrase by preventing its interaction with DNA. Acts by binding directly to the C-terminal domain of GyrB, which probably disrupts DNA binding by the gyrase. The polypeptide is DNA gyrase inhibitor YacG (Vibrio vulnificus (strain CMCP6)).